We begin with the raw amino-acid sequence, 402 residues long: Septin CDC11 (402 aa).

Residue methionine 1 is modified to N-acetylmethionine. At serine 4 the chain carries Phosphoserine. The Basic motif motif lies at 14 to 21 (RKRKTLKK). The 287-residue stretch at 21–307 (KSINFSIMII…ENYRTEALSG (287 aa)) folds into the Septin-type G domain. The G1 motif stretch occupies residues 31–38 (GESGSGRS). 31-38 (GESGSGRS) is a GTP binding site. The segment at 89 to 92 (DTPN) is G3 motif. Residues 171 to 174 (SKAD) form a G4 motif region. Residues 172–180 (KADSLTPKE) and glycine 233 contribute to the GTP site. The stretch at 318–376 (AKQEISESDYLMKEEQIKLEEERLRKFEERVHQDLINKRKELLERENELKEIEKRLLAE) forms a coiled coil. The residue at position 394 (serine 394) is a Phosphoserine; by CDC28. At serine 395 the chain carries Phosphoserine; by GIN4.

It belongs to the TRAFAC class TrmE-Era-EngA-EngB-Septin-like GTPase superfamily. Septin GTPase family. In terms of assembly, component of the septin complex which consists of CDC3, CDC10, CDC11, CDC12 and probably SEP7. The purified septin complex appeared to have a stoichiometry of 2 CDC3, 1 to 2 CDC10, 1 CDC11, 2 CDC12, and 1 or none SEP7 subunit. Interacts with HSL1. In terms of processing, hyphal induction causes immediate phosphorylation at Ser-395 by GIN4 and at Ser-394 by CDC28-CCN1. GIN4 phosphorylation at Ser-395 primes CDC11 for further phosphorylation by CDC28-CCN1. CDC28-HGC1 then maintains CDC11 phosphorylation throughout hyphal growth. Ser-4 is also phosphorylated in yeast cells but not hyphal cells. Met-1 is acetylated.

The protein localises to the bud neck. In terms of biological role, septins are GTPases involved in cytokinesis that assemble early in the cell cycle as a patch at the incipient bud site and form a ring before bud emergence, which transforms into an hour-glass shaped collar of cortical filaments that spans both sides of the mother-bud neck. This collar persists until just before cytokinesis, when it splits into two rings that occupy opposite sides of the neck. The septins at the bud neck serve as a structural scaffold that recruits different components involved in diverse processes at specific stages during the cell cycle. Many proteins bind asymmetrically to the septin collar. The septin assembly is regulated by protein kinase GIN4. Septins are also involved in cell morphogenesis, chlamydospores morphogenesis, bud site selection, chitin deposition, cell cycle regulation, cell compartmentalization, and spore wall formation. CDC11 is required for the correct localization of SEC3 at bud tips and bud necks. Plays a key role in invasive growth and virulence. The protein is Septin CDC11 (CDC11) of Candida albicans (strain SC5314 / ATCC MYA-2876) (Yeast).